The sequence spans 612 residues: MTLFLHYHIAIKYITFVNISIFMSKEKITRELLLQQELFKALKTHDIAANAKISRICRRIAGSVIALARQQSHTTENLYTHYINQAAFNTKDLAKVTTIIKNLFPGDKNKKLREIIDTPLLQNLVIEGSIERKIELNDPQYNTNYRKFEEIIDPNETKKVIDAMLRDKRVAQQDEFEETGKKTAGISAGYVANDSTGNTFILKHFYKTHAACKKIQDPKEQDQAITDRRDGVQELIGSTMYQFLLHDRAPKEGLVNADEQHPDSLYVRSKFFDNAVTLAEFCGLSGLTRVRINDKNLKRLEGFEKAIAACHILGDGDYHAGNLMVQNGKTITKIDHGRSFLEFHKDFASMIQSTAEMFIHPHVCYSYAIKAGNLSFNIDKYSEALNQMINQFDLKHMEAIVDQKLDELKKAGFDPNKIPLSINIKNFDDLKKYYKTHIKQNIINMQEVAKGAEIVKKFSNVLPSFKNGGWLEAFANSPIKEPLLYAIENNITIEGKDAQEWAYENNYQIKTAIGLTKETIKEQQWSKDFEGKWQEREVEIQRDKVEIQLSDPLKSIRIQDKFTAEKLGSLIVNFTKHTTTKNVTDKEVAKFYDNIMKVLKKSIILPSKMLKL.

This is an uncharacterized protein from Rickettsia prowazekii (strain Madrid E).